The chain runs to 344 residues: D-beta-hydroxybutyrate dehydrogenase, mitochondrial (344 aa).

The transit peptide at 1–46 directs the protein to the mitochondrion; that stretch reads MLTARLSRPLSQLPRKTLNFSDRENGTRGSLLLYSAPFVPVGRRTY. 59–83 lines the NAD(+) pocket; it reads LITGCDSGFGFSLAKHLHSEGFLVF. 2 positions are modified to N6-acetyllysine: K73 and K97. N6-acetyllysine; alternate is present on K103. An N6-succinyllysine; alternate modification is found at K103. An N6-acetyllysine modification is found at K177. S195 is a substrate binding site. Y208 serves as the catalytic Proton acceptor. Residue K212 is modified to N6-acetyllysine. S219 carries O-linked (GlcNAc) serine glycosylation. S246 carries the post-translational modification Phosphoserine. K260 is modified (N6-acetyllysine; alternate). K260 carries the N6-succinyllysine; alternate modification. K281 bears the N6-acetyllysine mark.

The protein belongs to the short-chain dehydrogenases/reductases (SDR) family. In terms of assembly, homotetramer.

It is found in the mitochondrion inner membrane. Its subcellular location is the mitochondrion matrix. It catalyses the reaction (R)-3-hydroxybutanoate + NAD(+) = acetoacetate + NADH + H(+). With respect to regulation, requires phosphatidylcholine as an allosteric activator for enzymatic activity. The sequence is that of D-beta-hydroxybutyrate dehydrogenase, mitochondrial from Bos taurus (Bovine).